The chain runs to 198 residues: Ribonuclease HII (198 aa).

One can recognise an RNase H type-2 domain in the interval 6–198 (EQIAGVDEVG…APCQASLLPD (193 aa)). Residues Asp-12, Glu-13, and Asp-108 each coordinate a divalent metal cation.

Belongs to the RNase HII family. It depends on Mn(2+) as a cofactor. The cofactor is Mg(2+).

The protein localises to the cytoplasm. The catalysed reaction is Endonucleolytic cleavage to 5'-phosphomonoester.. In terms of biological role, endonuclease that specifically degrades the RNA of RNA-DNA hybrids. This Acaryochloris marina (strain MBIC 11017) protein is Ribonuclease HII.